The sequence spans 356 residues: Probable farnesyl diphosphate synthase DDB_G0278823 (356 aa).

Isopentenyl diphosphate-binding residues include K55, R58, and Q94. Positions 101 and 105 each coordinate Mg(2+). Dimethylallyl diphosphate is bound at residue R110. R111 contacts isopentenyl diphosphate. Residues K203, T204, Q243, K260, and K269 each coordinate dimethylallyl diphosphate.

It belongs to the FPP/GGPP synthase family. The cofactor is Mg(2+).

The protein resides in the cytoplasm. It carries out the reaction isopentenyl diphosphate + dimethylallyl diphosphate = (2E)-geranyl diphosphate + diphosphate. The enzyme catalyses isopentenyl diphosphate + (2E)-geranyl diphosphate = (2E,6E)-farnesyl diphosphate + diphosphate. Its pathway is isoprenoid biosynthesis; farnesyl diphosphate biosynthesis; farnesyl diphosphate from geranyl diphosphate and isopentenyl diphosphate: step 1/1. It participates in isoprenoid biosynthesis; geranyl diphosphate biosynthesis; geranyl diphosphate from dimethylallyl diphosphate and isopentenyl diphosphate: step 1/1. Its activity is regulated as follows. Inhibited by aminobisphosphonate drugs (aBP), such as risedronate and alendronate. Key enzyme in isoprenoid biosynthesis which catalyzes the formation of farnesyl diphosphate (FPP), a sterol precursor. This Dictyostelium discoideum (Social amoeba) protein is Probable farnesyl diphosphate synthase DDB_G0278823.